A 198-amino-acid chain; its full sequence is Orotate phosphoribosyltransferase (198 aa).

Residues Arg108, Lys109, Lys112, His114, and 135–143 each bind 5-phospho-alpha-D-ribose 1-diphosphate; that span reads EDVVTTGKS. Residues Thr139 and Arg167 each coordinate orotate.

This sequence belongs to the purine/pyrimidine phosphoribosyltransferase family. PyrE subfamily. In terms of assembly, homodimer. The cofactor is Mg(2+).

It carries out the reaction orotidine 5'-phosphate + diphosphate = orotate + 5-phospho-alpha-D-ribose 1-diphosphate. Its pathway is pyrimidine metabolism; UMP biosynthesis via de novo pathway; UMP from orotate: step 1/2. Catalyzes the transfer of a ribosyl phosphate group from 5-phosphoribose 1-diphosphate to orotate, leading to the formation of orotidine monophosphate (OMP). The sequence is that of Orotate phosphoribosyltransferase from Synechocystis sp. (strain ATCC 27184 / PCC 6803 / Kazusa).